The following is a 191-amino-acid chain: Thymidine kinase (191 aa).

Residues Gly15 to Thr22 and Asp88 to Gln91 contribute to the ATP site. Glu89 (proton acceptor) is an active-site residue. Zn(2+) contacts are provided by Cys145, Cys148, Cys183, and Cys186.

Belongs to the thymidine kinase family. In terms of assembly, homotetramer.

The protein resides in the cytoplasm. It catalyses the reaction thymidine + ATP = dTMP + ADP + H(+). This is Thymidine kinase from Clostridium botulinum (strain Kyoto / Type A2).